Reading from the N-terminus, the 418-residue chain is Creatine kinase U-type, mitochondrial (418 aa).

Residues 1-39 (MAGPFSRLLSARPGLRLLALAGAGSLTAGILLRPESVGA) constitute a mitochondrion transit peptide. The segment at 40–64 (AAAERRRLYPPSAEYPDLRKHNNCM) is cardiolipin-binding. One can recognise a Phosphagen kinase N-terminal domain in the interval 46-132 (RLYPPSAEYP…FDPVIQERHN (87 aa)). At serine 152 the chain carries Phosphoserine. Residues 159–401 (YVLSSRVRTG…NYLIDCERRL (243 aa)) form the Phosphagen kinase C-terminal domain. 162–166 (SSRVR) is an ATP binding site. Phosphoserine is present on serine 197. A Phosphothreonine modification is found at threonine 214. Histidine 225 is an ATP binding site. Residue serine 233 is modified to Phosphoserine. ATP is bound by residues arginine 270, arginine 326, and 354 to 359 (RGTGGV). A Phosphothreonine modification is found at threonine 356. Phosphoserine is present on serine 366. Position 369 (aspartate 369) interacts with ATP.

Belongs to the ATP:guanido phosphotransferase family. In terms of assembly, exists as an octamer composed of four MTCK homodimers.

The protein localises to the mitochondrion inner membrane. The enzyme catalyses creatine + ATP = N-phosphocreatine + ADP + H(+). In terms of biological role, reversibly catalyzes the transfer of phosphate between ATP and various phosphogens (e.g. creatine phosphate). Creatine kinase isoenzymes play a central role in energy transduction in tissues with large, fluctuating energy demands, such as skeletal muscle, heart, brain and spermatozoa. This Mus musculus (Mouse) protein is Creatine kinase U-type, mitochondrial (Ckmt1).